The chain runs to 234 residues: SPX domain-containing protein 6 (234 aa).

One can recognise an SPX domain in the interval 1–137; that stretch reads MKFGKLLKRQ…GGALAAPVAE (137 aa). Residues 202-234 are disordered; sequence GSSTHGRHSLPPLTLPDSDWLRSFQPPSPIPIQ.

In terms of tissue distribution, predominantly expressed in roots and leaves.

Functionally, may be involved in maintaining cellular Pi homeostasis when plants are exposed to an external change in Pi. The chain is SPX domain-containing protein 6 from Oryza sativa subsp. japonica (Rice).